The following is a 165-amino-acid chain: Transmembrane protein 128 (165 aa).

4 consecutive transmembrane segments (helical) span residues 49–69 (NIHS…VDFF), 81–101 (WFLF…YCIV), 119–139 (LIPI…VALW), and 144–164 (FFTP…TSLL).

It is found in the membrane. This is Transmembrane protein 128 (TMEM128) from Bos taurus (Bovine).